A 385-amino-acid chain; its full sequence is Aryl-alcohol dehydrogenase [NADP(+)] (385 aa).

Y76 acts as the Proton donor in catalysis. 238-248 (NVLCAGKIRTD) contacts NADP(+).

This sequence belongs to the aldo/keto reductase family. Aldo/keto reductase 2 subfamily. The N-terminus is blocked.

It catalyses the reaction an aromatic primary alcohol + NADP(+) = an aromatic aldehyde + NADPH + H(+). In Phanerodontia chrysosporium (White-rot fungus), this protein is Aryl-alcohol dehydrogenase [NADP(+)].